The primary structure comprises 702 residues: Elongation factor G (702 aa).

The tr-type G domain occupies 8 to 290; it reads HRVRNIGIAA…AVAMYLPAPT (283 aa). GTP-binding positions include 17 to 24, 87 to 91, and 141 to 144; these read AHIDAGKT, DTPGH, and NKMD.

The protein belongs to the TRAFAC class translation factor GTPase superfamily. Classic translation factor GTPase family. EF-G/EF-2 subfamily.

The protein localises to the cytoplasm. Functionally, catalyzes the GTP-dependent ribosomal translocation step during translation elongation. During this step, the ribosome changes from the pre-translocational (PRE) to the post-translocational (POST) state as the newly formed A-site-bound peptidyl-tRNA and P-site-bound deacylated tRNA move to the P and E sites, respectively. Catalyzes the coordinated movement of the two tRNA molecules, the mRNA and conformational changes in the ribosome. This Aliarcobacter butzleri (strain RM4018) (Arcobacter butzleri) protein is Elongation factor G.